The chain runs to 232 residues: MLTRKQYELLRFINERLKEAGVPPSFDEMKDALDLRSKSGIHRLITALEERGFIRRLPNRARAIEVIKLPELSQAASNRRGFTPSVIEGNLGKVRTSTPALDDGERPVAVPVMGRIAAGTPIEALQTRSHTISVPADMLGNGDHYALEVRGDSMVDAGILDGDMALIQRNETADTGDIVVALIDDEEATLKRFRRRGASIALEPANTAYEVRILPPNRVKIQGKLVGLYRKY.

A DNA-binding region (H-T-H motif) is located at residues 26 to 46 (FDEMKDALDLRSKSGIHRLIT). Residues Ser-153 and Lys-191 each act as for autocatalytic cleavage activity in the active site.

It belongs to the peptidase S24 family. Homodimer.

It carries out the reaction Hydrolysis of Ala-|-Gly bond in repressor LexA.. In terms of biological role, represses a number of genes involved in the response to DNA damage (SOS response), including recA and lexA. In the presence of single-stranded DNA, RecA interacts with LexA causing an autocatalytic cleavage which disrupts the DNA-binding part of LexA, leading to derepression of the SOS regulon and eventually DNA repair. This chain is LexA repressor, found in Bradyrhizobium sp. (strain BTAi1 / ATCC BAA-1182).